The primary structure comprises 1004 residues: Bifunctional glutamine synthetase adenylyltransferase/adenylyl-removing enzyme (1004 aa).

The interval 1-497 is adenylyl removase; that stretch reads MCCTTVVVVR…LHAKLFYQPL (497 aa). The segment at 502 to 1004 is adenylyl transferase; it reads GPASLEIRHG…KTFVRKVFGS (503 aa).

This sequence belongs to the GlnE family. Mg(2+) is required as a cofactor.

The catalysed reaction is [glutamine synthetase]-O(4)-(5'-adenylyl)-L-tyrosine + phosphate = [glutamine synthetase]-L-tyrosine + ADP. It carries out the reaction [glutamine synthetase]-L-tyrosine + ATP = [glutamine synthetase]-O(4)-(5'-adenylyl)-L-tyrosine + diphosphate. Its function is as follows. Involved in the regulation of glutamine synthetase GlnA, a key enzyme in the process to assimilate ammonia. When cellular nitrogen levels are high, the C-terminal adenylyl transferase (AT) inactivates GlnA by covalent transfer of an adenylyl group from ATP to specific tyrosine residue of GlnA, thus reducing its activity. Conversely, when nitrogen levels are low, the N-terminal adenylyl removase (AR) activates GlnA by removing the adenylyl group by phosphorolysis, increasing its activity. The regulatory region of GlnE binds the signal transduction protein PII (GlnB) which indicates the nitrogen status of the cell. This is Bifunctional glutamine synthetase adenylyltransferase/adenylyl-removing enzyme from Mycobacterium leprae (strain TN).